The chain runs to 395 residues: Phosphopentomutase (395 aa).

Mn(2+) contacts are provided by Asp10, Asp294, His299, Asp335, His336, and His347.

This sequence belongs to the phosphopentomutase family. Mn(2+) is required as a cofactor.

It is found in the cytoplasm. It carries out the reaction 2-deoxy-alpha-D-ribose 1-phosphate = 2-deoxy-D-ribose 5-phosphate. The catalysed reaction is alpha-D-ribose 1-phosphate = D-ribose 5-phosphate. It participates in carbohydrate degradation; 2-deoxy-D-ribose 1-phosphate degradation; D-glyceraldehyde 3-phosphate and acetaldehyde from 2-deoxy-alpha-D-ribose 1-phosphate: step 1/2. Functionally, isomerase that catalyzes the conversion of deoxy-ribose 1-phosphate (dRib-1-P) and ribose 1-phosphate (Rib-1-P) to deoxy-ribose 5-phosphate (dRib-5-P) and ribose 5-phosphate (Rib-5-P), respectively. This Actinobacillus succinogenes (strain ATCC 55618 / DSM 22257 / CCUG 43843 / 130Z) protein is Phosphopentomutase.